We begin with the raw amino-acid sequence, 344 residues long: MKILGIETSCDDTAVSVYDSEEGLLSNVVSSQIKMHEEWGGVYPDLAAREHTKNIIPVLDRALKEASVNIKDIDGIAVTVAPGLIVSLVIGISVAKTLSWIYRKPLIPVHHIEAHIFASFITEKIDYPFIALVVSGGHTELYLIKGFEDYRYLGGTLDDAVGEAYDKVARMLGLGYPGGPVIDRLSKEGEDTVKLPRPLINDRGKNRFNFSFSGLKTAVLREIQKGVYRKEDIARSFQEAATDVLLAKTIDAMKEFNIKNVVIAGGVSANSRLREKFKEAEENHGIKAYFPPLYLCTDNGAMVAFTGYKRFKESGTTVDYSFEGKARLRMDKFVEIIRKSSVSS.

Fe cation is bound by residues histidine 111 and histidine 115. Substrate is bound by residues 133-137, aspartate 166, glycine 179, aspartate 183, and asparagine 270; that span reads VVSGG. Aspartate 298 is a Fe cation binding site.

This sequence belongs to the KAE1 / TsaD family. It depends on Fe(2+) as a cofactor.

It is found in the cytoplasm. It carries out the reaction L-threonylcarbamoyladenylate + adenosine(37) in tRNA = N(6)-L-threonylcarbamoyladenosine(37) in tRNA + AMP + H(+). Its function is as follows. Required for the formation of a threonylcarbamoyl group on adenosine at position 37 (t(6)A37) in tRNAs that read codons beginning with adenine. Is involved in the transfer of the threonylcarbamoyl moiety of threonylcarbamoyl-AMP (TC-AMP) to the N6 group of A37, together with TsaE and TsaB. TsaD likely plays a direct catalytic role in this reaction. This chain is tRNA N6-adenosine threonylcarbamoyltransferase, found in Persephonella marina (strain DSM 14350 / EX-H1).